Here is a 122-residue protein sequence, read N- to C-terminus: Vacuolar transporter chaperone complex subunit 1 (122 aa).

The Cytoplasmic segment spans residues Met1 to Thr32. A helical transmembrane segment spans residues Phe33–Phe53. Residues Gly54–Lys59 lie on the Vacuolar side of the membrane. The chain crosses the membrane as a helical span at residues Ile60–Tyr80. Residues His81–Pro101 lie on the Cytoplasmic side of the membrane. Residues Thr102 to Phe122 form a helical membrane-spanning segment.

This sequence belongs to the VTC1 family. As to quaternary structure, the VTC core complex is an integral membrane heterooligomer composed of at least the catalytic subunit vtc4 and the accessory subunits vtc1 and vtc2. vtc1 is a small membrane protein without hydrophilic domain. Vtc2 and vtc4 are related and have 2 hydrophilic domains that face the cytosol, an N-terminal SPX domain and the central core domain. The central core in vtc4 is the catalytic domain. Vtc1 interacts with GTP-bound Ras-like cdc42, which is subsequently inactivated.

It is found in the vacuole membrane. In terms of biological role, accessory subunit of the vacuolar transporter chaperone (VTC) complex. The VTC complex acts as a vacuolar polyphosphate polymerase that catalyzes the synthesis of inorganic polyphosphate (polyP) via transfer of phosphate from ATP to a growing polyP chain, releasing ADP. VTC exposes its catalytic domain vtc4 to the cytosol, where the growing polyP chain winds through a tunnel-shaped pocket, integrating cytoplasmic polymer synthesis with polyP membrane translocation. The VTC complex carries 9 vacuolar transmembrane domains, which are likely to constitute the translocation channel into the organelle lumen. PolyP synthesis is tightly coupled to its transport into the vacuole lumen, in order to avoid otherwise toxic intermediates in the cytosol, and it depends on the proton gradient across the membrane, formed by V-ATPase. Vtc1 contributes only 3 transmembrane domains to the complex. The VTC complex also plays a role in vacuolar membrane fusion. Involved in the control of cell polarity. The sequence is that of Vacuolar transporter chaperone complex subunit 1 from Schizosaccharomyces pombe (strain 972 / ATCC 24843) (Fission yeast).